Here is a 181-residue protein sequence, read N- to C-terminus: ATP-dependent protease subunit HslV (181 aa).

The active site involves Thr7. Residues Ala162, Cys165, and Thr168 each contribute to the Na(+) site.

Belongs to the peptidase T1B family. HslV subfamily. As to quaternary structure, a double ring-shaped homohexamer of HslV is capped on each side by a ring-shaped HslU homohexamer. The assembly of the HslU/HslV complex is dependent on binding of ATP.

It is found in the cytoplasm. The enzyme catalyses ATP-dependent cleavage of peptide bonds with broad specificity.. With respect to regulation, allosterically activated by HslU binding. Its function is as follows. Protease subunit of a proteasome-like degradation complex believed to be a general protein degrading machinery. The polypeptide is ATP-dependent protease subunit HslV (Coxiella burnetii (strain RSA 493 / Nine Mile phase I)).